The chain runs to 142 residues: MKNVPYLSAVGAIMYLMVVTRPDLAAAVGVLSQFASDPCPTHWQALKRVLRYLQSTQTYGLEFTRAGTAKLVGYSDADWAGDVESRRSTSGYLFKLNGGCVSWRSKKQRTVALSSTEDEYMALSEATQEAVWLTVRTRRTKG.

A signal peptide spans 1-27 (MKNVPYLSAVGAIMYLMVVTRPDLAAA). The RxLR signature appears at 48 to 51 (RVLR).

This sequence belongs to the RxLR effector family.

The protein localises to the secreted. The protein resides in the host chloroplast envelope. It localises to the host nucleus. Secreted effector that completely suppresses the host cell death induced by cell death-inducing proteins. The polypeptide is Secreted RxLR effector protein 161 (Plasmopara viticola (Downy mildew of grapevine)).